Reading from the N-terminus, the 168-residue chain is MAATPSAPAKSEMIDLTKLSPEQLIQIKQEFEQEITNVQDSLSTLHGCQAKYAGSKEALGTFQPNWENRQILVPLTSSMYVPGRVKDLNRFVIDIGTGYYIEKDLEGSKDYFKRRVEYVQEQIEKIEKIHLQKTRFYNSVMSVLEMKQAAAAKLQSQQQSQPAVTQSS.

It belongs to the prefoldin subunit alpha family. Heterohexamer of two PFD-alpha type and four PFD-beta type subunits.

Binds specifically to cytosolic chaperonin (c-CPN) and transfers target proteins to it. Binds to nascent polypeptide chain and promotes folding in an environment in which there are many competing pathways for nonnative proteins. This is Probable prefoldin subunit 5 from Drosophila melanogaster (Fruit fly).